A 383-amino-acid chain; its full sequence is ATP phosphoribosyltransferase regulatory subunit (383 aa).

The protein belongs to the class-II aminoacyl-tRNA synthetase family. HisZ subfamily. Heteromultimer composed of HisG and HisZ subunits.

It is found in the cytoplasm. The protein operates within amino-acid biosynthesis; L-histidine biosynthesis; L-histidine from 5-phospho-alpha-D-ribose 1-diphosphate: step 1/9. In terms of biological role, required for the first step of histidine biosynthesis. May allow the feedback regulation of ATP phosphoribosyltransferase activity by histidine. This is ATP phosphoribosyltransferase regulatory subunit from Paraburkholderia phytofirmans (strain DSM 17436 / LMG 22146 / PsJN) (Burkholderia phytofirmans).